Consider the following 549-residue polypeptide: Glucose-6-phosphate isomerase (549 aa).

E355 acts as the Proton donor in catalysis. Catalysis depends on residues H386 and K514.

This sequence belongs to the GPI family.

The protein localises to the cytoplasm. The enzyme catalyses alpha-D-glucose 6-phosphate = beta-D-fructose 6-phosphate. It functions in the pathway carbohydrate biosynthesis; gluconeogenesis. Its pathway is carbohydrate degradation; glycolysis; D-glyceraldehyde 3-phosphate and glycerone phosphate from D-glucose: step 2/4. Its function is as follows. Catalyzes the reversible isomerization of glucose-6-phosphate to fructose-6-phosphate. The chain is Glucose-6-phosphate isomerase from Salmonella paratyphi C (strain RKS4594).